A 369-amino-acid chain; its full sequence is Cytoplasmic tRNA 2-thiolation protein 1 (369 aa).

The protein belongs to the TtcA family. CTU1/NCS6/ATPBD3 subfamily.

The protein localises to the cytoplasm. It functions in the pathway tRNA modification; 5-methoxycarbonylmethyl-2-thiouridine-tRNA biosynthesis. In terms of biological role, plays a central role in 2-thiolation of mcm(5)S(2)U at tRNA wobble positions of tRNA(Lys), tRNA(Glu) and tRNA(Gln). Directly binds tRNAs and probably acts by catalyzing adenylation of tRNAs, an intermediate required for 2-thiolation. It is unclear whether it acts as a sulfurtransferase that transfers sulfur from thiocarboxylated URM1 onto the uridine of tRNAs at wobble position. Prior mcm(5) tRNA modification by the elongator complex is required for 2-thiolation. May also be involved in protein urmylation. The protein is Cytoplasmic tRNA 2-thiolation protein 1 of Cryptococcus neoformans var. neoformans serotype D (strain JEC21 / ATCC MYA-565) (Filobasidiella neoformans).